The chain runs to 406 residues: DNA primase DnaG (406 aa).

The Toprim domain maps to Pro169 to Ile247. 3 residues coordinate Mg(2+): Glu175, Asp220, and Asp222.

This sequence belongs to the archaeal DnaG primase family. Forms a ternary complex with MCM helicase and DNA. Component of the archaeal exosome complex. Interacts with Csl4 but not with Rrp4. It depends on Mg(2+) as a cofactor.

The enzyme catalyses ssDNA + n NTP = ssDNA/pppN(pN)n-1 hybrid + (n-1) diphosphate.. RNA polymerase that catalyzes the synthesis of short RNA molecules used as primers for DNA polymerase during DNA replication. Can use NTPs but not dNTPs. Binds DNA. Also part of the exosome, which is a complex involved in RNA degradation. Acts as a poly(A)-binding protein that enhances the interaction between heteromeric, adenine-rich transcripts and the exosome. The sequence is that of DNA primase DnaG from Saccharolobus solfataricus (strain ATCC 35092 / DSM 1617 / JCM 11322 / P2) (Sulfolobus solfataricus).